The chain runs to 466 residues: VGFKAGVKEYKLTYYTPEYETKDTDILAAFRVTPQPGVPPEEAGAAVAAESSTGTWTTVWTDGLTSLDRYKGRCYHIEPVPGETDQYICYVAYPLDLFEEGSVTNMFTSIVGNVFGFKALRALRLEDLRIPTAYIKTFQGPPHGIQVERDKLNKYGRPLLGCTIKPKLGLSAKNYGRAVYECLRGGLDFTKDDENVNSQPFMRWRDRFLFCAEALYKAQAETGEIKGHYLNATAGTCEEMMKRAVFARELGVPIIMHDYLTGGFTANTSLAHYCRDNGLLLHIHRAMHAVIDRQKNHGIHFRVLAKALRMSGGDHIHSGTVVGKLEGERDITLGFVDLLRDDFIEKDRSRGIYFTQDWVSLPGVIPVASGGIHVWHMPALTEIFGDDSVLQFGGGTLGHPWGNAPGAVANRVALEACVQARNEGRDLAAEGNAIIREASKWSPELAAACEVWKEIKFEFKAVDTLD.

At K4 the chain carries N6,N6,N6-trimethyllysine. Residues N113 and T163 each contribute to the substrate site. K165 serves as the catalytic Proton acceptor. K167 contacts substrate. Residues K191, D193, and E194 each contribute to the Mg(2+) site. N6-carboxylysine is present on K191. H284 serves as the catalytic Proton acceptor. Positions 285, 317, and 369 each coordinate substrate.

It belongs to the RuBisCO large chain family. Type I subfamily. Heterohexadecamer of 8 large chains and 8 small chains; disulfide-linked. The disulfide link is formed within the large subunit homodimers. Mg(2+) serves as cofactor. Post-translationally, the disulfide bond which can form in the large chain dimeric partners within the hexadecamer appears to be associated with oxidative stress and protein turnover.

It localises to the plastid. The protein resides in the chloroplast. It catalyses the reaction 2 (2R)-3-phosphoglycerate + 2 H(+) = D-ribulose 1,5-bisphosphate + CO2 + H2O. The catalysed reaction is D-ribulose 1,5-bisphosphate + O2 = 2-phosphoglycolate + (2R)-3-phosphoglycerate + 2 H(+). Its function is as follows. RuBisCO catalyzes two reactions: the carboxylation of D-ribulose 1,5-bisphosphate, the primary event in carbon dioxide fixation, as well as the oxidative fragmentation of the pentose substrate in the photorespiration process. Both reactions occur simultaneously and in competition at the same active site. In Proboscidea louisianica (Louisiana Devil's-claw), this protein is Ribulose bisphosphate carboxylase large chain.